Here is a 222-residue protein sequence, read N- to C-terminus: MSAVINKETLQAKIAEALKAGKPRRFKQSVELIVVLKGVDLSKPENRINLLVELPHPPKPNKIAAFAHGAFEVSAKNAGVDSIITRDQVEGLSGNKRAIRKLAKQYDFFIAPPDLMPLLGRVVGPIFGPRGKMPEVVPPNVDVKSVVERLRKAVRVRFRNEPVVKVRIGSEGQSPKEILENALVVLEEVNRKFPLRQYLKDLYFKKTMGPPVKVRAVEALVK.

This sequence belongs to the universal ribosomal protein uL1 family. As to quaternary structure, part of the 50S ribosomal subunit.

Binds directly to 23S rRNA. Probably involved in E site tRNA release. In terms of biological role, protein L1 is also a translational repressor protein, it controls the translation of its operon by binding to its mRNA. In Pyrobaculum aerophilum (strain ATCC 51768 / DSM 7523 / JCM 9630 / CIP 104966 / NBRC 100827 / IM2), this protein is Large ribosomal subunit protein uL1.